The chain runs to 232 residues: Ribonuclease 3 (232 aa).

The RNase III domain occupies 5–134; that stretch reads QTVLKNHFAI…FLGALLLDKD (130 aa). Residue glutamate 47 coordinates Mg(2+). The active site involves aspartate 51. Residues aspartate 120 and glutamate 123 each coordinate Mg(2+). Glutamate 123 is a catalytic residue. One can recognise a DRBM domain in the interval 160 to 229; that stretch reads DYKTHLQELL…AKNAVEKGLD (70 aa).

It belongs to the ribonuclease III family. As to quaternary structure, homodimer. The cofactor is Mg(2+).

It is found in the cytoplasm. The enzyme catalyses Endonucleolytic cleavage to 5'-phosphomonoester.. Digests double-stranded RNA. Involved in the processing of primary rRNA transcript to yield the immediate precursors to the large and small rRNAs (23S and 16S). Processes some mRNAs, and tRNAs when they are encoded in the rRNA operon. Processes pre-crRNA and tracrRNA of type II CRISPR loci if present in the organism. The polypeptide is Ribonuclease 3 (Streptococcus pneumoniae (strain CGSP14)).